The following is a 144-amino-acid chain: Large ribosomal subunit protein uL15 (144 aa).

The interval 1 to 59 (MRLNTISPAEGSKPTGKRSGRGIGSGLGKTGGVGHKGQKSRSGGRVKPGFEGGQMPIQR) is disordered. Over residues 21–35 (RGIGSGLGKTGGVGH) the composition is skewed to gly residues.

This sequence belongs to the universal ribosomal protein uL15 family. Part of the 50S ribosomal subunit.

Its function is as follows. Binds to the 23S rRNA. The polypeptide is Large ribosomal subunit protein uL15 (Alteromonas mediterranea (strain DSM 17117 / CIP 110805 / LMG 28347 / Deep ecotype)).